Here is a 477-residue protein sequence, read N- to C-terminus: UDP-N-acetylmuramate--L-alanine ligase (477 aa).

112-118 (GTHGKTT) contacts ATP.

This sequence belongs to the MurCDEF family.

The protein resides in the cytoplasm. It catalyses the reaction UDP-N-acetyl-alpha-D-muramate + L-alanine + ATP = UDP-N-acetyl-alpha-D-muramoyl-L-alanine + ADP + phosphate + H(+). The protein operates within cell wall biogenesis; peptidoglycan biosynthesis. In terms of biological role, cell wall formation. This Cupriavidus necator (strain ATCC 17699 / DSM 428 / KCTC 22496 / NCIMB 10442 / H16 / Stanier 337) (Ralstonia eutropha) protein is UDP-N-acetylmuramate--L-alanine ligase.